The primary structure comprises 310 residues: 2-phospho-L-lactate transferase (310 aa).

2 residues coordinate 7,8-didemethyl-8-hydroxy-5-deazariboflavin: aspartate 50 and arginine 89.

Belongs to the CofD family. In terms of assembly, homodimer. Requires Mg(2+) as cofactor.

It carries out the reaction (2S)-lactyl-2-diphospho-5'-guanosine + 7,8-didemethyl-8-hydroxy-5-deazariboflavin = oxidized coenzyme F420-0 + GMP + H(+). It functions in the pathway cofactor biosynthesis; coenzyme F420 biosynthesis. Functionally, catalyzes the transfer of the 2-phospholactate moiety from (2S)-lactyl-2-diphospho-5'-guanosine to 7,8-didemethyl-8-hydroxy-5-deazariboflavin (FO) with the formation of oxidized coenzyme F420-0 and GMP. In Methanopyrus kandleri (strain AV19 / DSM 6324 / JCM 9639 / NBRC 100938), this protein is 2-phospho-L-lactate transferase.